A 415-amino-acid polypeptide reads, in one-letter code: Probable carboxypeptidase ACLA_013260 (415 aa).

Positions 1–17 are cleaved as a signal peptide; that stretch reads MKFPWLLLVKGAASVAA. Asn-97 is a glycosylation site (N-linked (GlcNAc...) asparagine). Asp-145 serves as a coordination point for Zn(2+). Glu-177 (proton acceptor) is an active-site residue. Glu-178 lines the Zn(2+) pocket. An N-linked (GlcNAc...) asparagine glycan is attached at Asn-271.

Belongs to the peptidase M20A family. Requires Zn(2+) as cofactor.

It is found in the secreted. In Aspergillus clavatus (strain ATCC 1007 / CBS 513.65 / DSM 816 / NCTC 3887 / NRRL 1 / QM 1276 / 107), this protein is Probable carboxypeptidase ACLA_013260.